Consider the following 340-residue polypeptide: Cytochrome P450 monooxygenase cheG (340 aa).

N-linked (GlcNAc...) asparagine glycosylation occurs at Asn25. The helical transmembrane segment at 37-57 (MLLGIPTVILSLTPAVLRLLI) threads the bilayer. Cys283 contributes to the heme binding site. A disordered region spans residues 308-340 (LPPGQGKPEKGSMPNGSMSPDTKAKVLFRSRKL). N-linked (GlcNAc...) asparagine glycosylation is present at Asn322.

The protein belongs to the cytochrome P450 family. It depends on heme as a cofactor.

It localises to the membrane. The protein operates within secondary metabolite biosynthesis. Functionally, cytochrome P450 monooxygenase; part of the gene cluster that mediates the biosynthesis of chaetoglobosin A which has a unique inhibitory activity against actin polymerization in mammalian cells. Chaetoglobosin A and its intermediates are involved in the morphological differentiation of C.globosum. The first step of the pathway is the synthesis of prochaetoglobosin I via condensation of one acetyl-CoA, 8 malonyl-CoA, and a L-tryptophan molecule by the PKS-NRPS hybrid synthetase cheA, followed by reduction of backbone double bond to install desired geometry by the enoyl reductase cheB. Further multiple oxidation steps performed by the cytochrome P450 monooxygenases cheE and cheG, as well as by the FAD-linked oxidoreductase cheF, lead to the formation of chaetoglobosin A. Depending on the order of action of these reductases, distinct intermediates can be identified. Within the pathway, the cytochrome P450 monooxygenase cheE catalyzes a stereospecific epoxidation on prochaetoglobosin I, cytoglobosin D, and chaetoglobosin J intermediates. The FAD-linked oxidoreductase cheF performs dehydrogenation of the C-20 hydroxyl groups in the 20-dihyrochaetoglobosin A and cytoglobosin D intermediates. Finally, the cytochrome P450 monooxygenase cheG can catalyze the stereospecific dihydroxylation of prochaetoglobosin I and prochaetoglobosin IV at C-19 and C-20, respectively. The Diels-Alderase cheD may play a role in the post-PKS-NRPS biosynthetic steps catalyzing Diels-Alder cyclization. The sequence is that of Cytochrome P450 monooxygenase cheG from Chaetomium globosum (strain ATCC 6205 / CBS 148.51 / DSM 1962 / NBRC 6347 / NRRL 1970) (Soil fungus).